Reading from the N-terminus, the 292-residue chain is Homoserine kinase (292 aa).

Residue 84–94 participates in ATP binding; that stretch reads PLARGMGSSSA.

It belongs to the GHMP kinase family. Homoserine kinase subfamily.

Its subcellular location is the cytoplasm. It catalyses the reaction L-homoserine + ATP = O-phospho-L-homoserine + ADP + H(+). Its pathway is amino-acid biosynthesis; L-threonine biosynthesis; L-threonine from L-aspartate: step 4/5. Its function is as follows. Catalyzes the ATP-dependent phosphorylation of L-homoserine to L-homoserine phosphate. This is Homoserine kinase from Thermus thermophilus (strain ATCC 27634 / DSM 579 / HB8).